A 104-amino-acid polypeptide reads, in one-letter code: Large ribosomal subunit protein bL21 (104 aa).

It belongs to the bacterial ribosomal protein bL21 family. In terms of assembly, part of the 50S ribosomal subunit. Contacts protein L20.

Its function is as follows. This protein binds to 23S rRNA in the presence of protein L20. This Acidiphilium cryptum (strain JF-5) protein is Large ribosomal subunit protein bL21.